A 429-amino-acid polypeptide reads, in one-letter code: Transcription factor IIIA (429 aa).

The interval 1-45 (MGGEVLNNEGMPLAELKQETIPISRSESSESLNSLTSTRSSSSNR) is disordered. The span at 24 to 44 (SRSESSESLNSLTSTRSSSSN) shows a compositional bias: low complexity. C2H2-type zinc fingers lie at residues 49 to 74 (YFCDYDGCDKAFTRPSILTEHQLSVH), 80 to 102 (FQCDKCAKSFVKKSHLERHLYTH), 108 to 130 (FQCSYCGKGVTTRQQLKRHEVTH), 134 to 159 (FICPEEGCNLRFYKHPQLRAHILSVH), 163 to 186 (LTCPHCNKSFQRPYRLRNHISKHH), 194 to 219 (YQCTFAGCCKEFRIWSQLQSHIKNDH), 222 to 244 (LKCPICSKPCVGENGLQMHMIIH), 253 to 277 (WKCHICPDMSFSRKHDLLTHYGSIH), and 365 to 389 (YRCFYNNCSRTFKTKEKYEKHIDKH). A compositionally biased stretch (basic and acidic residues) spans 406-416 (KTLVDQNHKEP). A disordered region spans residues 406-429 (KTLVDQNHKEPFIIQKETQSAGDK).

It localises to the nucleus. Its function is as follows. Interacts with the internal control region (ICR) of approximately 50 bases within the 5S RNA genes, is required for correct transcription of these genes by RNA polymerase III. Also binds the transcribed 5S RNA's. The polypeptide is Transcription factor IIIA (PZF1) (Saccharomyces cerevisiae (strain ATCC 204508 / S288c) (Baker's yeast)).